We begin with the raw amino-acid sequence, 613 residues long: Activating transcription factor 3 (613 aa).

Disordered stretches follow at residues 77–115 and 133–218; these read RHFN…PSVQ and KRKL…NKIA. Residues 85–105 are compositionally biased toward low complexity; that stretch reads GQSHSQDSSHSSCSGSPLDSP. The segment covering 138-147 has biased composition (polar residues); the sequence is TCDSSSGSEQ. The segment covering 158-175 has biased composition (low complexity); that stretch reads NHNGHSGSSNNYSGSMSN. The span at 178 to 191 shows a compositional bias: acidic residues; it reads DLDDDCEESSDDDS. Positions 205–268 constitute a bZIP domain; the sequence is EDRRRRRRER…QKLVDMLKSH (64 aa). The interval 207 to 229 is basic motif; the sequence is RRRRRRERNKIAATKCRMKKRER. A leucine-zipper region spans residues 233-261; the sequence is LIKESEVLDTQNVELKNQVRQLETERQKL. A disordered region spans residues 337–446; that stretch reads PNGYCKPSPS…SSNATSSTTP (110 aa). The segment covering 356–368 has biased composition (low complexity); the sequence is QQQQQQQQQQQPQ. The segment covering 369–389 has biased composition (polar residues); it reads SLNPAGNNVIDQQHANPSPSL. The segment covering 402–446 has biased composition (low complexity); it reads GSASNHPSHNNNNNNNNSSGASSNTSNNNSNISSHSSNATSSTTP.

The protein belongs to the bZIP family. ATF subfamily. As to quaternary structure, interacts with Jra/jun; the interaction enhances the DNA-binding activity of Atf3. In terms of tissue distribution, moderate expression in some regions of the larval nervous system, the ring gland and imaginal disks. High expression in larval gut, excretory malpighian tubules, salivary glands, and, to a lesser extent, the fat body where levels are approximately 2.5-fold less than the gut.

The protein resides in the nucleus. Transcription factor which binds to the cAMP response element (CRE). Regulates metabolic and innate immune homeostasis, possibly by controlling appropriate expression of genes involved in peritrophic matrix composition and ensuring the normal digestive and immune function of the gut. Required for the expression of odorant receptors Or43b and Or47b. The protein is Activating transcription factor 3 of Drosophila melanogaster (Fruit fly).